A 303-amino-acid chain; its full sequence is Dihydroorotate dehydrogenase B (NAD(+)), catalytic subunit (303 aa).

FMN-binding positions include Ser-21 and 45-46 (KG). Substrate contacts are provided by residues Lys-45 and 69 to 73 (NAVGL). 2 residues coordinate FMN: Asn-99 and Asn-127. Asn-127 provides a ligand contact to substrate. Cys-130 functions as the Nucleophile in the catalytic mechanism. The FMN site is built by Lys-165 and Ile-191. Substrate is bound at residue 192 to 193 (NT). FMN-binding positions include Gly-217, 243-244 (GG), and 265-266 (GT).

It belongs to the dihydroorotate dehydrogenase family. Type 1 subfamily. Heterotetramer of 2 PyrK and 2 PyrD type B subunits. Requires FMN as cofactor.

The protein localises to the cytoplasm. The catalysed reaction is (S)-dihydroorotate + NAD(+) = orotate + NADH + H(+). It participates in pyrimidine metabolism; UMP biosynthesis via de novo pathway; orotate from (S)-dihydroorotate (NAD(+) route): step 1/1. Catalyzes the conversion of dihydroorotate to orotate with NAD(+) as electron acceptor. The sequence is that of Dihydroorotate dehydrogenase B (NAD(+)), catalytic subunit (pyrD) from Bacteroides fragilis (strain ATCC 25285 / DSM 2151 / CCUG 4856 / JCM 11019 / LMG 10263 / NCTC 9343 / Onslow / VPI 2553 / EN-2).